We begin with the raw amino-acid sequence, 203 residues long: MCDYKVSERAYAKLIFHAAKYPHQAVNGLLLAEKTSKGSQVEIVDAIPLFHQCLYVTPMAEVALMLIDAHAEREGLVIAGYYAAPENFYDNQVDKTPAAKIADKIQENFKNACFVVVDNKLMTLQHDRAAIQVFNCPGDSGARWSKAKFTLSQASDTLEGVSLLLKRGAMRDLVDFDNHLDNPDKNWTNDFLNQPLNDLQKLY.

The MPN domain maps to 4–140 (YKVSERAYAK…IQVFNCPGDS (137 aa)).

This sequence belongs to the EMC8/EMC9 family. In terms of assembly, component of the ER membrane protein complex (EMC).

The protein resides in the endoplasmic reticulum membrane. Functionally, part of the endoplasmic reticulum membrane protein complex (EMC) that enables the energy-independent insertion into endoplasmic reticulum membranes of newly synthesized multi-pass membrane proteins like rhodopsins. This Drosophila melanogaster (Fruit fly) protein is ER membrane protein complex subunit 8/9 homolog.